The chain runs to 255 residues: tRNA (guanine-N(7)-)-methyltransferase (255 aa).

Residues 1–21 form a disordered region; sequence MMHDDPNEAGLPPHDDAIPDE. Residues Glu-86, Glu-111, Asp-138, and Asp-161 each contribute to the S-adenosyl-L-methionine site. Asp-161 is a catalytic residue. Substrate is bound by residues Lys-165, Asp-197, and 232-235; that span reads TKFE.

The protein belongs to the class I-like SAM-binding methyltransferase superfamily. TrmB family.

It carries out the reaction guanosine(46) in tRNA + S-adenosyl-L-methionine = N(7)-methylguanosine(46) in tRNA + S-adenosyl-L-homocysteine. The protein operates within tRNA modification; N(7)-methylguanine-tRNA biosynthesis. Its function is as follows. Catalyzes the formation of N(7)-methylguanine at position 46 (m7G46) in tRNA. This chain is tRNA (guanine-N(7)-)-methyltransferase, found in Burkholderia lata (strain ATCC 17760 / DSM 23089 / LMG 22485 / NCIMB 9086 / R18194 / 383).